We begin with the raw amino-acid sequence, 90 residues long: Toxin 3FTx-Psa1 (90 aa).

The N-terminal stretch at 1–21 (MKTLPLVLAVVAFVYLDLAHT) is a signal peptide. Cystine bridges form between Cys24/Cys43, Cys36/Cys61, Cys65/Cys76, and Cys77/Cys82.

This sequence belongs to the three-finger toxin family. Ancestral subfamily. Expressed by the venom gland.

Its subcellular location is the secreted. The sequence is that of Toxin 3FTx-Psa1 from Psammophis mossambicus (Olive sand snake).